Consider the following 1363-residue polypeptide: Xanthine dehydrogenase (1363 aa).

Residues 35–121 enclose the 2Fe-2S ferredoxin-type domain; sequence DTIRFYLNGT…GKHVITVEGI (87 aa). Residues Cys73, Cys78, Cys81, Cys103, Cys142, Cys145, Cys177, and Cys179 each contribute to the [2Fe-2S] cluster site. Residues 266-450 form the FAD-binding PCMH-type domain; it reads FGNKRKKWYR…SSLRIPTASE (185 aa). FAD is bound by residues 294-301, Phe374, 384-388, Asp397, and Lys459; these read LIGGSTET and SPAGN. Mo-molybdopterin is bound by residues Gln798 and Phe829. 2 residues coordinate substrate: Glu833 and Arg911. Arg943 contributes to the Mo-molybdopterin binding site. The substrate site is built by Phe945 and Thr1041. Ala1110 lines the Mo-molybdopterin pocket. Residue Glu1295 is the Proton acceptor of the active site.

It belongs to the xanthine dehydrogenase family. Requires FAD as cofactor. The cofactor is Mo-molybdopterin. [2Fe-2S] cluster is required as a cofactor.

The protein localises to the peroxisome. The enzyme catalyses xanthine + NAD(+) + H2O = urate + NADH + H(+). It catalyses the reaction hypoxanthine + NAD(+) + H2O = xanthine + NADH + H(+). In terms of biological role, key enzyme in purine degradation. Catalyzes the oxidation of hypoxanthine to xanthine. Catalyzes the oxidation of xanthine to uric acid. In Emericella nidulans (strain FGSC A4 / ATCC 38163 / CBS 112.46 / NRRL 194 / M139) (Aspergillus nidulans), this protein is Xanthine dehydrogenase (hxA).